We begin with the raw amino-acid sequence, 92 residues long: Defensin alpha 4 (92 aa).

The first 19 residues, 1-19 (MKTLVLLSALVLLAFQVQA), serve as a signal peptide directing secretion. The propeptide occupies 20–58 (DPIQNTDEETKTEEQPGEEDQAVSISFGGQEGSALHEKS). The interval 23 to 42 (QNTDEETKTEEQPGEEDQAV) is disordered. 3 disulfide bridges follow: Cys-64-Cys-89, Cys-66-Cys-81, and Cys-71-Cys-88.

The protein belongs to the alpha-defensin family. In terms of tissue distribution, paneth cells of the small bowel.

It is found in the secreted. The protein localises to the cytoplasmic vesicle. Its subcellular location is the secretory vesicle. In terms of biological role, host-defense peptide that has antimicrobial activity. Exhibits activity against Gram-negative E.coli (in vitro). Probably contributes to the antimicrobial barrier function of the small bowel mucosa. In Mus musculus (Mouse), this protein is Defensin alpha 4.